The following is a 286-amino-acid chain: NAD(P)H azoreductase (286 aa).

Residues 6–11 (GGTGTI), arginine 31, and 136–141 (GFFMQN) each bind NADP(+).

This sequence belongs to the NmrA-type oxidoreductase family. Azoreductase type 3 subfamily. As to quaternary structure, monomer.

Its function is as follows. Catalyzes the reductive cleavage of azo bond in aromatic azo compounds to the corresponding amines. Uses preferentially NADPH rather than NADH as an electron donor for its activity. The enzyme reductively cleaved Orange II and carboxy-Orange II, and can also reduce several sulfonated structural analogs, which carry a hydroxy group in the 2 position of the naphthol ring. This is NAD(P)H azoreductase (azoB) from Xenophilus azovorans.